Consider the following 130-residue polypeptide: Glycine cleavage system H protein (130 aa).

One can recognise a Lipoyl-binding domain in the interval 25–106 (TALIGISDFA…PFDSWMIKVK (82 aa)). N6-lipoyllysine is present on Lys66.

The protein belongs to the GcvH family. The glycine cleavage system is composed of four proteins: P, T, L and H. The cofactor is (R)-lipoate.

The glycine cleavage system catalyzes the degradation of glycine. The H protein shuttles the methylamine group of glycine from the P protein to the T protein. This Leptospira borgpetersenii serovar Hardjo-bovis (strain JB197) protein is Glycine cleavage system H protein.